A 295-amino-acid chain; its full sequence is Pyridoxal 5'-phosphate synthase subunit PdxS (295 aa).

Position 25 (Asp-25) interacts with D-ribose 5-phosphate. Residue Lys-82 is the Schiff-base intermediate with D-ribose 5-phosphate of the active site. Gly-154 lines the D-ribose 5-phosphate pocket. D-glyceraldehyde 3-phosphate is bound at residue Arg-166. D-ribose 5-phosphate is bound by residues Gly-215 and 236-237; that span reads GS.

Belongs to the PdxS/SNZ family. As to quaternary structure, in the presence of PdxT, forms a dodecamer of heterodimers.

The enzyme catalyses aldehydo-D-ribose 5-phosphate + D-glyceraldehyde 3-phosphate + L-glutamine = pyridoxal 5'-phosphate + L-glutamate + phosphate + 3 H2O + H(+). Its pathway is cofactor biosynthesis; pyridoxal 5'-phosphate biosynthesis. Its function is as follows. Catalyzes the formation of pyridoxal 5'-phosphate from ribose 5-phosphate (RBP), glyceraldehyde 3-phosphate (G3P) and ammonia. The ammonia is provided by the PdxT subunit. Can also use ribulose 5-phosphate and dihydroxyacetone phosphate as substrates, resulting from enzyme-catalyzed isomerization of RBP and G3P, respectively. The protein is Pyridoxal 5'-phosphate synthase subunit PdxS of Listeria innocua serovar 6a (strain ATCC BAA-680 / CLIP 11262).